The sequence spans 115 residues: Cysteine-rich venom protein 5 (115 aa).

A signal peptide spans 1 to 22 (MSKVMIIMLVGMIFAIISTVSG). Intrachain disulfides connect cysteine 26/cysteine 41, cysteine 33/cysteine 44, and cysteine 40/cysteine 51. The disordered stretch occupies residues 54 to 115 (RIGPPINTQP…RKPTNRPRSH (62 aa)). Basic residues-rich tracts occupy residues 68 to 77 (QPTRRTRGPK) and 86 to 115 (NRTR…PRSH).

As to expression, expressed by the venom gland.

It localises to the secreted. In Pimpla hypochondriaca (Parasitoid wasp), this protein is Cysteine-rich venom protein 5.